The chain runs to 402 residues: Propionate kinase (402 aa).

ATP-binding residues include N11 and K18. N11 contributes to the Mg(2+) binding site. R86 is a binding site for substrate. D143 serves as the catalytic Proton donor/acceptor. ATP is bound by residues H175, 203–207 (HLGNG), 278–280 (DLR), and 326–330 (GIGEN).

The protein belongs to the acetokinase family. TdcD subfamily. Homodimer. Mg(2+) is required as a cofactor.

The enzyme catalyses propanoate + ATP = propanoyl phosphate + ADP. It functions in the pathway amino-acid degradation; L-threonine degradation via propanoate pathway; propanoate from L-threonine: step 4/4. Its function is as follows. Catalyzes the conversion of propionyl phosphate and ADP to propionate and ATP. The polypeptide is Propionate kinase (Edwardsiella piscicida).